The following is a 236-amino-acid chain: MRLSAQLTNTKLADEEVPELASVPDGVSRWTGADLDRLRSAARRGGVGAEQQDLEQKLCRTIDILGARSQKTQGINAVLTSVARLRESNTFRLYLLTQNHRGVGILKMGVKKLFVTHPVTCGLVEVDPLCVLDFYVDESCQRQGYGKQLYAHMLDAEHVSRPELLAIDRPSDKLLGFMKKHYGLTAYTPQVNKFVVFHGFFGHTTVSERGKLLRTTSPTGAAAAATGTKAKNEMPG.

The region spanning 21–201 is the N-acetyltransferase domain; that stretch reads ASVPDGVSRW…NKFVVFHGFF (181 aa). Acetyl-CoA contacts are provided by residues 134–147 and 171–180; these read FYVD…GYGK and SDKLLGFMKK. The tract at residues 217–236 is disordered; that stretch reads SPTGAAAAATGTKAKNEMPG. Low complexity predominate over residues 219–229; sequence TGAAAAATGTK.

This sequence belongs to the acetyltransferase ATAT1 family.

It carries out the reaction L-lysyl-[alpha-tubulin] + acetyl-CoA = N(6)-acetyl-L-lysyl-[alpha-tubulin] + CoA + H(+). Specifically acetylates 'Lys-40' in alpha-tubulin on the lumenal side of microtubules. Promotes microtubule destabilization and accelerates microtubule dynamics; this activity may be independent of acetylation activity. Acetylates alpha-tubulin with a slow enzymatic rate, due to a catalytic site that is not optimized for acetyl transfer. Enters the microtubule through each end and diffuses quickly throughout the lumen of microtubules. Acetylates only long/old microtubules because of its slow acetylation rate since it does not have time to act on dynamically unstable microtubules before the enzyme is released. In Leishmania braziliensis, this protein is Alpha-tubulin N-acetyltransferase.